A 247-amino-acid polypeptide reads, in one-letter code: Adenosine 5'-phosphosulfate reductase (247 aa).

[4Fe-4S] cluster-binding residues include cysteine 133, cysteine 134, cysteine 216, and cysteine 219. Residues 222 to 247 form a disordered region; that stretch reads KPAPGSDPRSGRWAGASKTECGLHAS. Cysteine 242 serves as the catalytic Nucleophile; cysteine thiosulfonate intermediate.

The protein belongs to the PAPS reductase family. CysH subfamily. It depends on [4Fe-4S] cluster as a cofactor.

It localises to the cytoplasm. The catalysed reaction is [thioredoxin]-disulfide + sulfite + AMP + 2 H(+) = adenosine 5'-phosphosulfate + [thioredoxin]-dithiol. The protein operates within sulfur metabolism; hydrogen sulfide biosynthesis; sulfite from sulfate. Its function is as follows. Catalyzes the formation of sulfite from adenosine 5'-phosphosulfate (APS) using thioredoxin as an electron donor. The sequence is that of Adenosine 5'-phosphosulfate reductase from Rhodococcus erythropolis (strain PR4 / NBRC 100887).